The primary structure comprises 213 residues: Probable germin-like protein subfamily 2 member 5 (213 aa).

The first 22 residues, 1–22, serve as a signal peptide directing secretion; it reads MASFATHLVVVVTMLFVAMASA. Cys-29 and Cys-44 form a disulfide bridge. Residues 58–203 enclose the Cupin type-1 domain; that stretch reads KGLANIAATN…SFQLKHKQVK (146 aa). Asn-67 carries N-linked (GlcNAc...) asparagine glycosylation. 4 residues coordinate Mn(2+): His-106, His-108, Glu-113, and His-152.

The protein belongs to the germin family. As to quaternary structure, oligomer (believed to be a pentamer but probably hexamer).

The protein resides in the secreted. It localises to the extracellular space. The protein localises to the apoplast. Its function is as follows. May play a role in plant defense. Probably has no oxalate oxidase activity even if the active site is conserved. In Arabidopsis thaliana (Mouse-ear cress), this protein is Probable germin-like protein subfamily 2 member 5.